Here is a 222-residue protein sequence, read N- to C-terminus: MAASETIEIRRETAQVPYREALDAMASRNAAIAEGTAPELIWLLEHPPVYTAGTSASPDELLDPRFEVVEAGRGGRYTYHGPGQRVGYVLLDLRKRARDVRGFVHALEGWVIETLADFGVESWRAEGRVGIWTRGADGREAKIGAIGVRIRRWVTMHGFSVNLSPDLAHFGGIVPCGIEEFGVTSLAALGREVTPDQWDEALLSHLDGFLARLDTPCPPEAA.

The 180-residue stretch at 35–214 (GTAPELIWLL…HLDGFLARLD (180 aa)) folds into the BPL/LPL catalytic domain. Substrate contacts are provided by residues 73-80 (RGGRYTYH), 145-147 (AIG), and 158-160 (GFS). The Acyl-thioester intermediate role is filled by C176.

Belongs to the LipB family.

Its subcellular location is the cytoplasm. It catalyses the reaction octanoyl-[ACP] + L-lysyl-[protein] = N(6)-octanoyl-L-lysyl-[protein] + holo-[ACP] + H(+). The protein operates within protein modification; protein lipoylation via endogenous pathway; protein N(6)-(lipoyl)lysine from octanoyl-[acyl-carrier-protein]: step 1/2. Functionally, catalyzes the transfer of endogenously produced octanoic acid from octanoyl-acyl-carrier-protein onto the lipoyl domains of lipoate-dependent enzymes. Lipoyl-ACP can also act as a substrate although octanoyl-ACP is likely to be the physiological substrate. The protein is Octanoyltransferase of Novosphingobium aromaticivorans (strain ATCC 700278 / DSM 12444 / CCUG 56034 / CIP 105152 / NBRC 16084 / F199).